The primary structure comprises 115 residues: U3-lycotoxin-Ls1k (115 aa).

The N-terminal stretch at 1–20 (MKFVLLFGVLLVTLFSYSSA) is a signal peptide. Positions 21–44 (EMFDDFDQADEDELLSLIEKEEAR) are excised as a propeptide. 4 cysteine pairs are disulfide-bonded: cysteine 48/cysteine 63, cysteine 55/cysteine 72, cysteine 62/cysteine 87, and cysteine 74/cysteine 85.

Belongs to the neurotoxin 19 (CSTX) family. 01 subfamily. In terms of tissue distribution, expressed by the venom gland.

Its subcellular location is the secreted. This chain is U3-lycotoxin-Ls1k, found in Lycosa singoriensis (Wolf spider).